Here is a 215-residue protein sequence, read N- to C-terminus: 3-isopropylmalate dehydratase small subunit (215 aa).

It belongs to the LeuD family. LeuD type 1 subfamily. Heterodimer of LeuC and LeuD.

The catalysed reaction is (2R,3S)-3-isopropylmalate = (2S)-2-isopropylmalate. The protein operates within amino-acid biosynthesis; L-leucine biosynthesis; L-leucine from 3-methyl-2-oxobutanoate: step 2/4. Its function is as follows. Catalyzes the isomerization between 2-isopropylmalate and 3-isopropylmalate, via the formation of 2-isopropylmaleate. The protein is 3-isopropylmalate dehydratase small subunit of Stutzerimonas stutzeri (strain A1501) (Pseudomonas stutzeri).